A 418-amino-acid polypeptide reads, in one-letter code: Acetylornithine aminotransferase (418 aa).

Residues 116-117 and Phe-149 each bind pyridoxal 5'-phosphate; that span reads GA. Arg-152 serves as a coordination point for N(2)-acetyl-L-ornithine. 240-243 is a pyridoxal 5'-phosphate binding site; sequence DEVQ. The residue at position 269 (Lys-269) is an N6-(pyridoxal phosphate)lysine. Ser-296 contributes to the N(2)-acetyl-L-ornithine binding site. A pyridoxal 5'-phosphate-binding site is contributed by Thr-297.

The protein belongs to the class-III pyridoxal-phosphate-dependent aminotransferase family. ArgD subfamily. Homodimer. It depends on pyridoxal 5'-phosphate as a cofactor.

It is found in the cytoplasm. It carries out the reaction N(2)-acetyl-L-ornithine + 2-oxoglutarate = N-acetyl-L-glutamate 5-semialdehyde + L-glutamate. It functions in the pathway amino-acid biosynthesis; L-arginine biosynthesis; N(2)-acetyl-L-ornithine from L-glutamate: step 4/4. The protein is Acetylornithine aminotransferase of Prochlorococcus marinus (strain MIT 9313).